We begin with the raw amino-acid sequence, 238 residues long: Auxin-responsive protein IAA2 (238 aa).

The EAR-like (transcriptional repression) motif lies at 24-28; sequence LCLGL. 3 stretches are compositionally biased toward low complexity: residues 33–44, 59–69, and 85–94; these read SSSSSSKPSEGS, ASKPSGAAAAA, and ASSSSSSSKQ. Disordered stretches follow at residues 33 to 69 and 82 to 114; these read SSSS…AAAA and RNLA…KDGG. The region spanning 118–216 is the PB1 domain; the sequence is GMFVKINMDG…TAKRLRVLKS (99 aa). A disordered region spans residues 217-238; that stretch reads SDLPPPSLMRAAGSRKRAAADS. Over residues 229-238 the composition is skewed to basic residues; the sequence is GSRKRAAADS.

Belongs to the Aux/IAA family. Homodimers and heterodimers. Highly expressed in flowers.

The protein resides in the nucleus. Its function is as follows. Aux/IAA proteins are short-lived transcriptional factors that function as repressors of early auxin response genes at low auxin concentrations. The chain is Auxin-responsive protein IAA2 (IAA2) from Oryza sativa subsp. japonica (Rice).